The primary structure comprises 421 residues: MRVIVLGSGVIGVASAYYLARQGAEVTVLDRQSGPAEETSFGNAGQISPGYSTPWAAPGIPFKAVKWMFQHHAPLAINLDGSMWQLQWMAQMLKNCNPQSYAVNKERMMRVAEYSRDCLRELRKDTGIHYENRAKGTLQLFRKEAQMEAVQRDISVLEECGVSYELLNGNELGRVEPALANAQDKLVGGLHLPNDETGDCYLFTNALAQIAKELGVNFQFNQNVEKLIVEGDQIKGVQVNGKVLTADRYVLAFGSYSRDFLKPLDLQLPVYPVKGYSLTIPIVAPAFAPQSTVLDETYKIAITRFDQRIRVGGMAELSGFNLGLNEDRHATLQMVTQDLFPGGDMEQASFWTGLRPMTPDSTPIIGATRFKNLFLNTGHGTLGWTMACGSGKLISDIVLNHKTDISTDGLSIQRYSHAHAA.

3–17 (VIVLGSGVIGVASAY) provides a ligand contact to FAD.

The protein belongs to the DadA oxidoreductase family. The cofactor is FAD.

The catalysed reaction is a D-alpha-amino acid + A + H2O = a 2-oxocarboxylate + AH2 + NH4(+). It functions in the pathway amino-acid degradation; D-alanine degradation; NH(3) and pyruvate from D-alanine: step 1/1. Its function is as follows. Oxidative deamination of D-amino acids. The protein is D-amino acid dehydrogenase of Acinetobacter baumannii (strain SDF).